The sequence spans 423 residues: Probable multifunctional protein ADE2 (423 aa).

The tract at residues 1 to 263 (MSSLAEIASR…KVMDITATFS (263 aa)) is SAICAR synthetase. The AIR carboxylase stretch occupies residues 264–423 (KHQQKCHVLV…NIYNANRKLE (160 aa)).

This sequence in the N-terminal section; belongs to the SAICAR synthetase family. The protein in the C-terminal section; belongs to the AIR carboxylase family. Class II subfamily.

The enzyme catalyses 5-amino-1-(5-phospho-D-ribosyl)imidazole-4-carboxylate + L-aspartate + ATP = (2S)-2-[5-amino-1-(5-phospho-beta-D-ribosyl)imidazole-4-carboxamido]succinate + ADP + phosphate + 2 H(+). It catalyses the reaction 5-amino-1-(5-phospho-D-ribosyl)imidazole-4-carboxylate + H(+) = 5-amino-1-(5-phospho-beta-D-ribosyl)imidazole + CO2. Its pathway is purine metabolism; IMP biosynthesis via de novo pathway; 5-amino-1-(5-phospho-D-ribosyl)imidazole-4-carboxamide from 5-amino-1-(5-phospho-D-ribosyl)imidazole-4-carboxylate: step 1/2. The protein operates within purine metabolism; IMP biosynthesis via de novo pathway; 5-amino-1-(5-phospho-D-ribosyl)imidazole-4-carboxylate from 5-amino-1-(5-phospho-D-ribosyl)imidazole (carboxylase route): step 1/1. This Caenorhabditis elegans protein is Probable multifunctional protein ADE2.